A 50-amino-acid polypeptide reads, in one-letter code: Sperm protamine P1 (50 aa).

It belongs to the protamine P1 family. Testis.

It is found in the nucleus. The protein localises to the chromosome. Its function is as follows. Protamines substitute for histones in the chromatin of sperm during the haploid phase of spermatogenesis. They compact sperm DNA into a highly condensed, stable and inactive complex. In Chilonatalus micropus (Cuban funnel-eared bat), this protein is Sperm protamine P1 (PRM1).